Here is a 238-residue protein sequence, read N- to C-terminus: Ribosomal RNA small subunit methyltransferase G (238 aa).

S-adenosyl-L-methionine-binding positions include Gly-77, Phe-82, 128-129, and Arg-147; that span reads AE.

Belongs to the methyltransferase superfamily. RNA methyltransferase RsmG family.

It localises to the cytoplasm. Specifically methylates the N7 position of guanine in position 535 of 16S rRNA. The protein is Ribosomal RNA small subunit methyltransferase G of Listeria innocua serovar 6a (strain ATCC BAA-680 / CLIP 11262).